The primary structure comprises 507 residues: Dolichyl pyrophosphate Man9GlcNAc2 alpha-1,3-glucosyltransferase (507 aa).

At 1 to 2 (ME) the chain is on the cytoplasmic side. The chain crosses the membrane as a helical span at residues 3–23 (SWTWMTVVVLLGLTVRWTVSL). The Lumenal segment spans residues 24–114 (NSYSGAGKPP…SQAHKLFMRT (91 aa)). Asn59 carries N-linked (GlcNAc...) asparagine glycosylation. Residues 115-135 (TVLAADLLIYIPAVLLYCYSL) traverse the membrane as a helical segment. Residues 136 to 143 (KEISPKRK) are Cytoplasmic-facing. A helical membrane pass occupies residues 144–164 (IASALCILLYPGLILIDYGHF). The Lumenal portion of the chain corresponds to 165–172 (QYNSVSLG). A helical membrane pass occupies residues 173 to 193 (FALWGVLGVSCDWDLLGSLAF). At 194-229 (CLALNYKQMELYHSLPFFCFLLGKCFKKGLRGKGSA) the chain is on the cytoplasmic side. The chain crosses the membrane as a helical span at residues 230 to 250 (LFIRIACTVVASFLLCWLPFL). The Lumenal segment spans residues 251-297 (TEREHALQVVRRLFPVDRGLFEDKVANIWCSLNVFLKIKDILPRHIQ). A helical membrane pass occupies residues 298–318 (IAISFCFTFLSLLPACIKLTV). Residues 319 to 332 (QPSAKGFRFTLVSC) lie on the Cytoplasmic side of the membrane. A helical membrane pass occupies residues 333-353 (ALSFFLFSFQVHEKSILLVSL). Residues 354–361 (PVCLVLTE) lie on the Lumenal side of the membrane. A helical transmembrane segment spans residues 362-382 (IPFMSTWFLLVSTFSMLPLLL). Over 383–385 (KDQ) the chain is Cytoplasmic. Residues 386 to 406 (LLLPSVVTVMAFLIACSTFFP) traverse the membrane as a helical segment. At 407-437 (MFENTSEEQLQLKSFAVSVRRHLPGFTFLPR) the chain is on the lumenal side. The helical transmembrane segment at 438 to 458 (IIQCLFLSSVITMILLTILSV) threads the bilayer. Residues 459–468 (TLDPPQKLPD) lie on the Cytoplasmic side of the membrane. A helical transmembrane segment spans residues 469 to 489 (LFSVLICFVSCVNFVFFLVYF). Residues 490-507 (NIVIMWDSKNGRNRKKID) are Lumenal-facing.

This sequence belongs to the ALG6/ALG8 glucosyltransferase family.

It localises to the endoplasmic reticulum membrane. The enzyme catalyses an alpha-D-Man-(1-&gt;2)-alpha-D-Man-(1-&gt;2)-alpha-D-Man-(1-&gt;3)-[alpha-D-Man-(1-&gt;2)-alpha-D-Man-(1-&gt;3)-[alpha-D-Man-(1-&gt;2)-alpha-D-Man-(1-&gt;6)]-alpha-D-Man-(1-&gt;6)]-beta-D-Man-(1-&gt;4)-beta-D-GlcNAc-(1-&gt;4)-alpha-D-GlcNAc-diphospho-di-trans,poly-cis-dolichol + a di-trans,poly-cis-dolichyl beta-D-glucosyl phosphate = an alpha-D-Glc-(1-&gt;3)-alpha-D-Man-(1-&gt;2)-alpha-D-Man-(1-&gt;2)-alpha-D-Man-(1-&gt;3)-[alpha-D-Man-(1-&gt;2)-alpha-D-Man-(1-&gt;3)-[alpha-D-Man-(1-&gt;2)-alpha-D-Man-(1-&gt;6)]-alpha-D-Man-(1-&gt;6)]-beta-D-Man-(1-&gt;4)-beta-D-GlcNAc-(1-&gt;4)-alpha-D-GlcNAc-diphospho-di-trans,poly-cis-dolichol + a di-trans,poly-cis-dolichyl phosphate + H(+). It participates in protein modification; protein glycosylation. Functionally, dolichyl pyrophosphate Man9GlcNAc2 alpha-1,3-glucosyltransferase that operates in the biosynthetic pathway of dolichol-linked oligosaccharides, the glycan precursors employed in protein asparagine (N)-glycosylation. The assembly of dolichol-linked oligosaccharides begins on the cytosolic side of the endoplasmic reticulum membrane and finishes in its lumen. The sequential addition of sugars to dolichol pyrophosphate produces dolichol-linked oligosaccharides containing fourteen sugars, including two GlcNAcs, nine mannoses and three glucoses. Once assembled, the oligosaccharide is transferred from the lipid to nascent proteins by oligosaccharyltransferases. In the lumen of the endoplasmic reticulum, adds the first glucose residue from dolichyl phosphate glucose (Dol-P-Glc) onto the lipid-linked oligosaccharide intermediate Man(9)GlcNAc(2)-PP-Dol to produce Glc(1)Man(9)GlcNAc(2)-PP-Dol. Glc(1)Man(9)GlcNAc(2)-PP-Dol is a substrate for ALG8, the following enzyme in the biosynthetic pathway. The chain is Dolichyl pyrophosphate Man9GlcNAc2 alpha-1,3-glucosyltransferase from Rattus norvegicus (Rat).